Consider the following 192-residue polypeptide: Ribosomal RNA large subunit methyltransferase E (192 aa).

The S-adenosyl-L-methionine site is built by Gly48, Phe50, Asp67, Asp85, and Asp107. Lys147 (proton acceptor) is an active-site residue.

The protein belongs to the class I-like SAM-binding methyltransferase superfamily. RNA methyltransferase RlmE family.

The protein localises to the cytoplasm. The catalysed reaction is uridine(2552) in 23S rRNA + S-adenosyl-L-methionine = 2'-O-methyluridine(2552) in 23S rRNA + S-adenosyl-L-homocysteine + H(+). Specifically methylates the uridine in position 2552 of 23S rRNA at the 2'-O position of the ribose in the fully assembled 50S ribosomal subunit. In Borrelia garinii subsp. bavariensis (strain ATCC BAA-2496 / DSM 23469 / PBi) (Borreliella bavariensis), this protein is Ribosomal RNA large subunit methyltransferase E.